We begin with the raw amino-acid sequence, 290 residues long: MKKKTLLPLFLGIMVFLAGCDYSKPEKRSGFFYNTFVDPMKNVLDWLGNNLLNDNYGLAIIILVLVIRIILLPFMLSNYKNSHMMRQKMKVAKPEVEKIQEKVKRARTQEEKMAANQELMQVYKKYDMNPIKSMLGCLPMLIQLPIIMGLYFVLKDQLVDGLFKYPHFLWFDLGRPDIWITIIAGVLYFIQAYVSSKTMPDEQRQMGYMMMVISPIMIIWISLSSASALGLYWSVSAAFLVVQTHFANIYYEKVAKKEVQPFIEAYEREHNGGSNKKGKNTQVVSKKKKK.

The signal sequence occupies residues 1 to 19; the sequence is MKKKTLLPLFLGIMVFLAG. The N-palmitoyl cysteine moiety is linked to residue Cys20. A lipid anchor (S-diacylglycerol cysteine) is attached at Cys20. 5 helical membrane-spanning segments follow: residues 56–76, 134–154, 176–196, 207–224, and 229–251; these read YGLA…PFML, MLGC…YFVL, PDIW…YVSS, GYMM…ISLS, and LGLY…NIYY. Residues 270 to 290 form a disordered region; it reads HNGGSNKKGKNTQVVSKKKKK.

The protein belongs to the OXA1/ALB3/YidC family. Type 2 subfamily.

It localises to the cell membrane. Required for the insertion and/or proper folding and/or complex formation of integral membrane proteins into the membrane. Involved in integration of membrane proteins that insert both dependently and independently of the Sec translocase complex, as well as at least some lipoproteins. This is Membrane protein insertase YidC from Staphylococcus aureus (strain MRSA252).